The sequence spans 390 residues: Peroxisomal sarcosine oxidase (390 aa).

FAD is bound at residue 9 to 39 (DAIVIGAGIQGCFTAYHLAKHRKRILLLEQF). Position 126 is an N6-acetyllysine (Lys126). S-8alpha-FAD cysteine is present on Cys319. A Microbody targeting signal motif is present at residues 388-390 (AHL).

Belongs to the MSOX/MTOX family. FAD serves as cofactor. Expressed in the liver and kidney.

The protein resides in the peroxisome. It catalyses the reaction sarcosine + O2 + H2O = formaldehyde + glycine + H2O2. The catalysed reaction is L-pipecolate + O2 = L-1-piperideine-6-carboxylate + H2O2 + H(+). Its function is as follows. Metabolizes sarcosine and L-pipecolic acid. This is Peroxisomal sarcosine oxidase (PIPOX) from Homo sapiens (Human).